The following is a 343-amino-acid chain: Cytosolic Fe-S cluster assembly factor CFD1 (343 aa).

15-22 serves as a coordination point for ATP; sequence GKGGVGKS. Polar residues-rich tracts occupy residues 80 to 91 and 99 to 110; these read PSSDGLNGSQRA and ESSSSTVETAPQ. A disordered region spans residues 80-110; the sequence is PSSDGLNGSQRANKPDDSNESSSSTVETAPQ. The [4Fe-4S] cluster site is built by cysteine 241 and cysteine 244.

This sequence belongs to the Mrp/NBP35 ATP-binding proteins family. NUBP2/CFD1 subfamily. Heterotetramer of 2 NBP35 and 2 CFD1 chains. [4Fe-4S] cluster is required as a cofactor.

It localises to the cytoplasm. In terms of biological role, component of the cytosolic iron-sulfur (Fe/S) protein assembly (CIA) machinery. Required for maturation of extramitochondrial Fe-S proteins. The NBP35-CFD1 heterotetramer forms a Fe-S scaffold complex, mediating the de novo assembly of an Fe-S cluster and its transfer to target apoproteins. The polypeptide is Cytosolic Fe-S cluster assembly factor CFD1 (Coccidioides immitis (strain RS) (Valley fever fungus)).